Consider the following 405-residue polypeptide: Elongation factor Tu (405 aa).

One can recognise a tr-type G domain in the interval 10–215 (KPHVNVGTIG…AVDSYIPTPE (206 aa)). Positions 19–26 (GHVDHGKT) are G1. 19 to 26 (GHVDHGKT) is a GTP binding site. A Mg(2+)-binding site is contributed by threonine 26. The G2 stretch occupies residues 61–65 (GITIN). The tract at residues 82 to 85 (DCPG) is G3. GTP contacts are provided by residues 82-86 (DCPGH) and 137-140 (NKVD). A G4 region spans residues 137–140 (NKVD). Residues 175 to 177 (SAL) form a G5 region.

This sequence belongs to the TRAFAC class translation factor GTPase superfamily. Classic translation factor GTPase family. EF-Tu/EF-1A subfamily. Monomer.

It localises to the cytoplasm. The catalysed reaction is GTP + H2O = GDP + phosphate + H(+). GTP hydrolase that promotes the GTP-dependent binding of aminoacyl-tRNA to the A-site of ribosomes during protein biosynthesis. This chain is Elongation factor Tu, found in Deinonema sp.